The following is a 135-amino-acid chain: Histone H3 (135 aa).

The interval Met1–Arg40 is disordered. Residues Lys19–Pro31 are compositionally biased toward low complexity.

It belongs to the histone H3 family. The nucleosome is a histone octamer containing two molecules each of H2A, H2B, H3 and H4 assembled in one H3-H4 heterotetramer and two H2A-H2B heterodimers. The octamer wraps approximately 147 bp of DNA.

It localises to the nucleus. Its subcellular location is the chromosome. Functionally, core component of nucleosome. Nucleosomes wrap and compact DNA into chromatin, limiting DNA accessibility to the cellular machineries which require DNA as a template. Histones thereby play a central role in transcription regulation, DNA repair, DNA replication and chromosomal stability. DNA accessibility is regulated via a complex set of post-translational modifications of histones, also called histone code, and nucleosome remodeling. The polypeptide is Histone H3 (Mastigamoeba balamuthi (Phreatamoeba balamuthi)).